The sequence spans 294 residues: Small ribosomal subunit protein uS2 (294 aa).

A compositionally biased stretch (basic and acidic residues) spans 232–245; it reads RAAEQDKAADDKAQ. A disordered region spans residues 232 to 294; it reads RAAEQDKAAD…GSEEDGEAAN (63 aa). Residues 246–265 show a composition bias toward low complexity; that stretch reads EQAAAEAAKPEPAAPAPAAE.

This sequence belongs to the universal ribosomal protein uS2 family.

The sequence is that of Small ribosomal subunit protein uS2 from Desulfatibacillum aliphaticivorans.